A 420-amino-acid chain; its full sequence is Zinc finger protein 362 (420 aa).

Disordered stretches follow at residues 1–28 (MSRS…WPPP), 54–80 (RPPH…ESSQ), and 115–155 (VTGL…SQSR). A compositionally biased stretch (low complexity) spans 121 to 154 (STRTPSVSTSESSAGAGTGTGTSTPSTPTTTSQS). Threonine 162 carries the post-translational modification Phosphothreonine. A disordered region spans residues 178–202 (TIQGHGLLGPPKSERGRKKIKAENP). Lysine 198 participates in a covalent cross-link: Glycyl lysine isopeptide (Lys-Gly) (interchain with G-Cter in SUMO2). 6 C2H2-type zinc fingers span residues 227 to 249 (YRCK…SKSH), 255 to 277 (HKCP…LRIH), 283 to 305 (YHCS…TRIH), 311 to 335 (YKCP…QRQH), 341 to 363 (YKCP…LSAH), and 371 to 393 (YCCS…MSKH). A Phosphoserine modification is found at serine 404.

This sequence belongs to the krueppel C2H2-type zinc-finger protein family.

Its subcellular location is the nucleus. In terms of biological role, may be involved in transcriptional regulation. The chain is Zinc finger protein 362 (ZNF362) from Homo sapiens (Human).